The primary structure comprises 353 residues: Protein RecA (353 aa).

67–74 serves as a coordination point for ATP; that stretch reads GPESSGKT.

This sequence belongs to the RecA family.

It localises to the cytoplasm. Its function is as follows. Can catalyze the hydrolysis of ATP in the presence of single-stranded DNA, the ATP-dependent uptake of single-stranded DNA by duplex DNA, and the ATP-dependent hybridization of homologous single-stranded DNAs. It interacts with LexA causing its activation and leading to its autocatalytic cleavage. In Shewanella loihica (strain ATCC BAA-1088 / PV-4), this protein is Protein RecA.